We begin with the raw amino-acid sequence, 256 residues long: Thiazole synthase (256 aa).

K95 (schiff-base intermediate with DXP) is an active-site residue. 1-deoxy-D-xylulose 5-phosphate is bound by residues G156, 182 to 183 (AG), and 204 to 205 (NT).

This sequence belongs to the ThiG family. In terms of assembly, homotetramer. Forms heterodimers with either ThiH or ThiS.

The protein localises to the cytoplasm. It catalyses the reaction [ThiS sulfur-carrier protein]-C-terminal-Gly-aminoethanethioate + 2-iminoacetate + 1-deoxy-D-xylulose 5-phosphate = [ThiS sulfur-carrier protein]-C-terminal Gly-Gly + 2-[(2R,5Z)-2-carboxy-4-methylthiazol-5(2H)-ylidene]ethyl phosphate + 2 H2O + H(+). It functions in the pathway cofactor biosynthesis; thiamine diphosphate biosynthesis. Its function is as follows. Catalyzes the rearrangement of 1-deoxy-D-xylulose 5-phosphate (DXP) to produce the thiazole phosphate moiety of thiamine. Sulfur is provided by the thiocarboxylate moiety of the carrier protein ThiS. In vitro, sulfur can be provided by H(2)S. The protein is Thiazole synthase of Klebsiella pneumoniae (strain 342).